A 357-amino-acid polypeptide reads, in one-letter code: Olfactory receptor 2B2 (357 aa).

The Extracellular portion of the chain corresponds to 1–25 (MNWVNKSVPQEFILLVFSDQPWLEI). N5 is a glycosylation site (N-linked (GlcNAc...) asparagine). The chain crosses the membrane as a helical span at residues 26–49 (PPFVMFLFSYILTIFGNLTIILVS). Over 50–57 (HVDFKLHT) the chain is Cytoplasmic. A helical transmembrane segment spans residues 58–79 (PMYFFLSNLSLLDLCYTTSTVP). Topologically, residues 80–100 (QMLVNICNTRKVISYGGCVAQ) are extracellular. A disulfide bridge links C97 with C189. Residues 101 to 120 (LFIFLALGSTECLLLAVMCF) traverse the membrane as a helical segment. Over 121-139 (DRFVAICRPLHYSIIMHQR) the chain is Cytoplasmic. The helical transmembrane segment at 140 to 158 (LCFQLAAASWISGFSNSVL) threads the bilayer. Residues 159 to 195 (QSTWTLKMPLCGHKEVDHFFCEVPALLKLSCVDTTAN) lie on the Extracellular side of the membrane. The helical transmembrane segment at 196 to 219 (EAELFFISVLFLLIPVTLILISYA) threads the bilayer. The Cytoplasmic segment spans residues 220–236 (FIVQAVLRIQSAEGQRK). A helical membrane pass occupies residues 237–259 (AFGTCGSHLIVVSLFYGTAISMY). At 260-272 (LQPPSPSSKDRGK) the chain is on the extracellular side. A helical transmembrane segment spans residues 273-292 (MVSLFCGIIAPMLNPLIYTL). Residues 293 to 357 (RNKEVKEAFK…YCNLPQRKFP (65 aa)) lie on the Cytoplasmic side of the membrane.

Belongs to the G-protein coupled receptor 1 family.

Its subcellular location is the cell membrane. Its function is as follows. Odorant receptor. The polypeptide is Olfactory receptor 2B2 (OR2B2) (Homo sapiens (Human)).